A 95-amino-acid polypeptide reads, in one-letter code: Co-chaperonin GroES (95 aa).

This sequence belongs to the GroES chaperonin family. In terms of assembly, heptamer of 7 subunits arranged in a ring. Interacts with the chaperonin GroEL.

Its subcellular location is the cytoplasm. In terms of biological role, together with the chaperonin GroEL, plays an essential role in assisting protein folding. The GroEL-GroES system forms a nano-cage that allows encapsulation of the non-native substrate proteins and provides a physical environment optimized to promote and accelerate protein folding. GroES binds to the apical surface of the GroEL ring, thereby capping the opening of the GroEL channel. This is Co-chaperonin GroES from Rickettsia typhi (strain ATCC VR-144 / Wilmington).